The sequence spans 381 residues: Queuine tRNA-ribosyltransferase (381 aa).

D96 acts as the Proton acceptor in catalysis. Substrate-binding positions include 96–100 (DSGGF), D150, Q193, and G220. The tract at residues 251-257 (GVGSPDA) is RNA binding. The active-site Nucleophile is D270. The interval 275 to 279 (TRIAR) is RNA binding; important for wobble base 34 recognition. Zn(2+) is bound by residues C308, C310, C313, and H339.

The protein belongs to the queuine tRNA-ribosyltransferase family. As to quaternary structure, homodimer. Within each dimer, one monomer is responsible for RNA recognition and catalysis, while the other monomer binds to the replacement base PreQ1. Zn(2+) serves as cofactor.

It carries out the reaction 7-aminomethyl-7-carbaguanine + guanosine(34) in tRNA = 7-aminomethyl-7-carbaguanosine(34) in tRNA + guanine. It functions in the pathway tRNA modification; tRNA-queuosine biosynthesis. In terms of biological role, catalyzes the base-exchange of a guanine (G) residue with the queuine precursor 7-aminomethyl-7-deazaguanine (PreQ1) at position 34 (anticodon wobble position) in tRNAs with GU(N) anticodons (tRNA-Asp, -Asn, -His and -Tyr). Catalysis occurs through a double-displacement mechanism. The nucleophile active site attacks the C1' of nucleotide 34 to detach the guanine base from the RNA, forming a covalent enzyme-RNA intermediate. The proton acceptor active site deprotonates the incoming PreQ1, allowing a nucleophilic attack on the C1' of the ribose to form the product. After dissociation, two additional enzymatic reactions on the tRNA convert PreQ1 to queuine (Q), resulting in the hypermodified nucleoside queuosine (7-(((4,5-cis-dihydroxy-2-cyclopenten-1-yl)amino)methyl)-7-deazaguanosine). This Bacillus velezensis (strain DSM 23117 / BGSC 10A6 / LMG 26770 / FZB42) (Bacillus amyloliquefaciens subsp. plantarum) protein is Queuine tRNA-ribosyltransferase.